A 232-amino-acid chain; its full sequence is MSVRHTIRAMYHMEQSWFSRVGQFTDSIEEFLIAFFMGAMTLLTFANVIMRYLFNDNILWALEGTVFMFAWMVLVGASFGVKRHFHIGVDVLINIAPARLRKLYALVAVACCLAFSILLLIGSWNYWHPFITERAWYETDDIPMPDMLQFLADWVNEGERYEKLPRFIPYAALPIGMALLTFRFLQIAWQIITGKLDRMIAGHEAEEDLEALKAELSEAGEAMMPKTQGKEK.

The next 4 helical transmembrane spans lie at 30–50 (EFLI…NVIM), 58–78 (ILWA…VGAS), 103–123 (LYAL…LIGS), and 167–187 (FIPY…FLQI).

It belongs to the TRAP transporter small permease family. In terms of assembly, the complex comprises the extracytoplasmic solute receptor protein DctP, and the two transmembrane proteins DctQ and DctM.

The protein resides in the cell inner membrane. Part of the tripartite ATP-independent periplasmic (TRAP) transport system DctPQM involved in C4-dicarboxylates uptake. This Vibrio cholerae serotype O1 (strain ATCC 39315 / El Tor Inaba N16961) protein is C4-dicarboxylate TRAP transporter small permease protein DctQ.